The primary structure comprises 562 residues: Dihydroxy-acid dehydratase (562 aa).

Position 78 (aspartate 78) interacts with Mg(2+). [2Fe-2S] cluster is bound at residue cysteine 119. Residues aspartate 120 and lysine 121 each contribute to the Mg(2+) site. Lysine 121 bears the N6-carboxylysine mark. Cysteine 192 is a [2Fe-2S] cluster binding site. Glutamate 450 contacts Mg(2+). The active-site Proton acceptor is the serine 476.

Belongs to the IlvD/Edd family. In terms of assembly, homodimer. It depends on [2Fe-2S] cluster as a cofactor. Requires Mg(2+) as cofactor.

It catalyses the reaction (2R)-2,3-dihydroxy-3-methylbutanoate = 3-methyl-2-oxobutanoate + H2O. The enzyme catalyses (2R,3R)-2,3-dihydroxy-3-methylpentanoate = (S)-3-methyl-2-oxopentanoate + H2O. Its pathway is amino-acid biosynthesis; L-isoleucine biosynthesis; L-isoleucine from 2-oxobutanoate: step 3/4. The protein operates within amino-acid biosynthesis; L-valine biosynthesis; L-valine from pyruvate: step 3/4. Functions in the biosynthesis of branched-chain amino acids. Catalyzes the dehydration of (2R,3R)-2,3-dihydroxy-3-methylpentanoate (2,3-dihydroxy-3-methylvalerate) into 2-oxo-3-methylpentanoate (2-oxo-3-methylvalerate) and of (2R)-2,3-dihydroxy-3-methylbutanoate (2,3-dihydroxyisovalerate) into 2-oxo-3-methylbutanoate (2-oxoisovalerate), the penultimate precursor to L-isoleucine and L-valine, respectively. This Nautilia profundicola (strain ATCC BAA-1463 / DSM 18972 / AmH) protein is Dihydroxy-acid dehydratase.